A 393-amino-acid polypeptide reads, in one-letter code: Lipid-A-disaccharide synthase (393 aa).

The protein belongs to the LpxB family.

The enzyme catalyses a lipid X + a UDP-2-N,3-O-bis[(3R)-3-hydroxyacyl]-alpha-D-glucosamine = a lipid A disaccharide + UDP + H(+). Its pathway is bacterial outer membrane biogenesis; LPS lipid A biosynthesis. Functionally, condensation of UDP-2,3-diacylglucosamine and 2,3-diacylglucosamine-1-phosphate to form lipid A disaccharide, a precursor of lipid A, a phosphorylated glycolipid that anchors the lipopolysaccharide to the outer membrane of the cell. The chain is Lipid-A-disaccharide synthase from Actinobacillus pleuropneumoniae serotype 7 (strain AP76).